Consider the following 132-residue polypeptide: MSGGKGGKAGSAAKASQSRSAKAGLTFPVGRVHRLLRRGNYAQRIGSGAPVYLTAVLEYLAAEILELAGNAARDNKKTRIIPRHLQLAIRNDDELNKLLGNVTIAQGGVLPNIHQNLLPKKSAKTAKASQEL.

An N-acetylserine modification is found at Ser-2. N6-acetyllysine is present on residues Lys-5 and Lys-8. Lys-14 and Lys-22 each carry N6-succinyllysine. At Gln-106 the chain carries N5-methylglutamine. At Lys-120 the chain carries N6-malonyllysine. A Glycyl lysine isopeptide (Lys-Gly) (interchain with G-Cter in SUMO) cross-link involves residue Lys-127. Phosphoserine is present on Ser-129. Residues 129–130 (SQ) carry the [ST]-Q motif motif.

The protein belongs to the histone H2A family. In terms of assembly, the nucleosome is a histone octamer containing two molecules each of H2A, H2B, H3 and H4 assembled in one H3-H4 heterotetramer and two H2A-H2B heterodimers. The octamer wraps approximately 147 bp of DNA. Interacts with NAP1. Post-translationally, phosphorylated to form H2AS128ph (gamma-H2A) in response to DNA double-strand breaks (DSBs) generated by exogenous genotoxic agents and by stalled replication forks. Phosphorylation is dependent on the DNA damage checkpoint kinases MEC1/ATR and TEL1/ATM, spreads on either side of a detected DSB site and may mark the surrounding chromatin for recruitment of proteins required for DNA damage signaling and repair. Gamma-H2A interacts with ARP4, a shared component of the NuA4 histone acetyltransferase complex and the INO80 and SWR1 chromatin remodeling complexes, and serves to recruit first NuA4, mediating histone H4 acetylation, and subsequently the INO80/SWR1 complexes, facilitating DNA resection, to DSB sites. Gamma-H2A is required for sequestering cohesin around the break site, which is important for efficient post-replicative double-strand break repair by homologous recombination, holding the damaged chromatid close to its undamaged sister template. Gamma-H2A is removed from the DNA prior to the strand invasion-primer extension step of the repair process and subsequently dephosphorylated by PPH3, a component of the histone H2A phosphatase complex (HTP-C). Dephosphorylation is necessary for efficient recovery from the DNA damage checkpoint. In terms of processing, N-acetylated by NAT4. Acetylated by ESA1, a component of the NuA4 histone acetyltransferase (HAT) complex, to form H2AK4ac and H2AK7ac. Post-translationally, glutamine methylation at Gln-106 (H2AQ105me) by NOP1 is specifically dedicated to polymerase I. It is present at 35S ribosomal DNA locus and impairs binding of the FACT complex. In terms of processing, sumoylated to from H2AK126su. May lead to transcriptional repression.

The protein resides in the nucleus. Its subcellular location is the chromosome. Functionally, core component of nucleosome which plays a central role in DNA double strand break (DSB) repair. Nucleosomes wrap and compact DNA into chromatin, limiting DNA accessibility to the cellular machineries which require DNA as a template. Histones thereby play a central role in transcription regulation, DNA repair, DNA replication and chromosomal stability. DNA accessibility is regulated via a complex set of post-translational modifications of histones, also called histone code, and nucleosome remodeling. The sequence is that of Histone H2A.2 (HTA2) from Saccharomyces cerevisiae (strain ATCC 204508 / S288c) (Baker's yeast).